We begin with the raw amino-acid sequence, 582 residues long: Two-component response regulator ORR26 (582 aa).

The region spanning 11 to 126 is the Response regulatory domain; that stretch reads RVLVVDDDPT…ELRNIWQHVY (116 aa). D62 bears the 4-aspartylphosphate mark. Over residues 166-182 the composition is skewed to basic and acidic residues; sequence SDTMRKRKDVDKDHADQ. The interval 166–187 is disordered; sequence SDTMRKRKDVDKDHADQESSDG. Residues 189-248 constitute a DNA-binding region (myb-like GARP); sequence TVKKARVVWSVDLHQKFVNAVNQIGFDKVGPKKILDLMNVPGLTRENVASHLQKYRLYLS.

This sequence belongs to the ARR family. Type-B subfamily. Two-component system major event consists of a His-to-Asp phosphorelay between a sensor histidine kinase (HK) and a response regulator (RR). In plants, the His-to-Asp phosphorelay involves an additional intermediate named Histidine-containing phosphotransfer protein (HPt). This multistep phosphorelay consists of a His-Asp-His-Asp sequential transfer of a phosphate group between first a His and an Asp of the HK protein, followed by the transfer to a conserved His of the HPt protein and finally the transfer to an Asp in the receiver domain of the RR protein.

The protein resides in the nucleus. Transcriptional activator that binds specific DNA sequence. Functions as a response regulator involved in His-to-Asp phosphorelay signal transduction system. Phosphorylation of the Asp residue in the receiver domain activates the ability of the protein to promote the transcription of target genes. May directly activate some type-A response regulators in response to cytokinins. In Oryza sativa subsp. japonica (Rice), this protein is Two-component response regulator ORR26.